A 205-amino-acid chain; its full sequence is Small ribosomal subunit protein uS4c (205 aa).

The S4 RNA-binding domain maps to M93–Q154.

Belongs to the universal ribosomal protein uS4 family. Part of the 30S ribosomal subunit. Contacts protein S5. The interaction surface between S4 and S5 is involved in control of translational fidelity.

The protein localises to the plastid. It localises to the chloroplast. Functionally, one of the primary rRNA binding proteins, it binds directly to 16S rRNA where it nucleates assembly of the body of the 30S subunit. In terms of biological role, with S5 and S12 plays an important role in translational accuracy. The chain is Small ribosomal subunit protein uS4c (rps4) from Chaetosphaeridium globosum (Charophycean green alga).